A 440-amino-acid chain; its full sequence is C4-dicarboxylate transport protein (440 aa).

The next 8 membrane-spanning stretches (helical) occupy residues 8-28 (LYLQVLLAVVLGALVGHLFPA), 40-60 (FIKLVKMLIAPIVFATVVTGI), 74-94 (LKGLLYFEVLTTVALAIGLVV), 147-167 (GDILQVLLFSVLFGAALAALK), 187-207 (IVGFVMRLAPVGAFGAMAFTV), 221-241 (LIACFYATSALFVVLMLGLVL), 288-308 (VVGLVVPMGYSFNLDGTSIYL), and 354-374 (AATLSAVGNIPVAGLALLLGV). The tract at residues 419–440 (EEVEPANEPEPPAVPAGAGLHG) is disordered.

Belongs to the dicarboxylate/amino acid:cation symporter (DAACS) (TC 2.A.23) family.

The protein resides in the cell inner membrane. In terms of biological role, responsible for the transport of dicarboxylates such as succinate, fumarate, and malate from the periplasm across the membrane. This Anaeromyxobacter dehalogenans (strain 2CP-1 / ATCC BAA-258) protein is C4-dicarboxylate transport protein.